A 216-amino-acid polypeptide reads, in one-letter code: Adenylate kinase (216 aa).

10–15 contributes to the ATP binding site; sequence GAGKGT. Residues 30-59 are NMP; that stretch reads STGDMIRETIKSDSEIGKELKKVLDAGQLV. AMP contacts are provided by residues threonine 31, arginine 36, 57–59, and glutamine 92; that span reads QLV. Residues 122–159 are LID; sequence GRRVHPASGRTYHTKFNPPKVEGKDDITGEDLITRTDD. Residues arginine 123 and 132 to 133 contribute to the ATP site; that span reads TY. 2 residues coordinate AMP: arginine 156 and arginine 167. ATP is bound at residue glutamine 202.

It belongs to the adenylate kinase family. Monomer.

It localises to the cytoplasm. The enzyme catalyses AMP + ATP = 2 ADP. The protein operates within purine metabolism; AMP biosynthesis via salvage pathway; AMP from ADP: step 1/1. Catalyzes the reversible transfer of the terminal phosphate group between ATP and AMP. Plays an important role in cellular energy homeostasis and in adenine nucleotide metabolism. The protein is Adenylate kinase of Francisella philomiragia subsp. philomiragia (strain ATCC 25017 / CCUG 19701 / FSC 153 / O#319-036).